The chain runs to 374 residues: Ribonuclease D (374 aa).

The region spanning Tyr3 to Thr171 is the 3'-5' exonuclease domain. Residues Lys210–Glu289 enclose the HRDC domain.

This sequence belongs to the RNase D family. The cofactor is a divalent metal cation.

The protein localises to the cytoplasm. It carries out the reaction Exonucleolytic cleavage that removes extra residues from the 3'-terminus of tRNA to produce 5'-mononucleotides.. Exonuclease involved in the 3' processing of various precursor tRNAs. Initiates hydrolysis at the 3'-terminus of an RNA molecule and releases 5'-mononucleotides. This chain is Ribonuclease D, found in Musicola paradisiaca (strain Ech703) (Dickeya paradisiaca).